The primary structure comprises 150 residues: Large ribosomal subunit protein bL9 (150 aa).

It belongs to the bacterial ribosomal protein bL9 family.

In terms of biological role, binds to the 23S rRNA. The protein is Large ribosomal subunit protein bL9 of Pseudoalteromonas atlantica (strain T6c / ATCC BAA-1087).